Reading from the N-terminus, the 305-residue chain is Ribosomal RNA small subunit methyltransferase H (305 aa).

S-adenosyl-L-methionine is bound by residues 33–35, D51, F78, D96, and Q103; that span reads GGY.

It belongs to the methyltransferase superfamily. RsmH family.

It localises to the cytoplasm. It catalyses the reaction cytidine(1402) in 16S rRNA + S-adenosyl-L-methionine = N(4)-methylcytidine(1402) in 16S rRNA + S-adenosyl-L-homocysteine + H(+). In terms of biological role, specifically methylates the N4 position of cytidine in position 1402 (C1402) of 16S rRNA. The sequence is that of Ribosomal RNA small subunit methyltransferase H from Rickettsia bellii (strain RML369-C).